A 305-amino-acid chain; its full sequence is Olfactory receptor 4F4 (305 aa).

Residues M1–T18 are Extracellular-facing. The helical transmembrane segment at F19–V42 threads the bilayer. The Cytoplasmic portion of the chain corresponds to V43–S50. A helical transmembrane segment spans residues P51 to P72. Residues K73–Q93 lie on the Extracellular side of the membrane. Cysteines 90 and 182 form a disulfide. A helical transmembrane segment spans residues I94 to F113. At D114–N132 the chain is on the cytoplasmic side. A helical membrane pass occupies residues A133–S151. Residues Q152–L188 are Extracellular-facing. The chain crosses the membrane as a helical span at residues D189–T212. Topologically, residues I213–K228 are cytoplasmic. Residues A229 to Y251 form a helical membrane-spanning segment. Over A252–K262 the chain is Extracellular. Residues F263–L282 form a helical membrane-spanning segment. Over R283 to F305 the chain is Cytoplasmic.

This sequence belongs to the G-protein coupled receptor 1 family.

Its subcellular location is the cell membrane. Functionally, odorant receptor. The sequence is that of Olfactory receptor 4F4 (OR4F4) from Homo sapiens (Human).